Reading from the N-terminus, the 409-residue chain is Nucleoprotein (409 aa).

Disordered stretches follow at residues methionine 1–asparagine 32, leucine 44–lysine 63, glycine 120–serine 145, and arginine 164–glutamate 193. The segment covering proline 15 to glycine 31 has biased composition (low complexity). The interval serine 29–isoleucine 160 is RNA-binding. Residues glycine 31 to aspartate 156 form the CoV N NTD domain. A compositionally biased stretch (low complexity) spans arginine 164–alanine 179. The span at proline 180–alanine 192 shows a compositional bias: basic and acidic residues. At serine 190 the chain carries Phosphoserine; by host. The 117-residue stretch at threonine 215 to proline 331 folds into the CoV N CTD domain. Positions arginine 226–aspartate 333 are dimerization. An intrachain disulfide couples cysteine 320 to cysteine 323. Positions valine 327–leucine 409 are disordered. The span at arginine 341–proline 355 shows a compositional bias: polar residues. Positions lysine 368–asparagine 384 are enriched in basic and acidic residues. At threonine 378 the chain carries Phosphothreonine; by host. Serine 379 carries the post-translational modification Phosphoserine; by host.

Belongs to the gammacoronavirus nucleocapsid protein family. In terms of assembly, homooligomer. Both monomeric and oligomeric forms interact with RNA. Interacts with protein M. Interacts with NSP3; this interaction serves to tether the genome to the newly translated replicase-transcriptase complex at a very early stage of infection. In terms of processing, ADP-ribosylated. The ADP-ribosylation is retained in the virion during infection. Post-translationally, phosphorylated on serine and threonine residues.

It is found in the virion. Its subcellular location is the host endoplasmic reticulum-Golgi intermediate compartment. It localises to the host Golgi apparatus. Functionally, packages the positive strand viral genome RNA into a helical ribonucleocapsid (RNP) and plays a fundamental role during virion assembly through its interactions with the viral genome and membrane protein M. Plays an important role in enhancing the efficiency of subgenomic viral RNA transcription as well as viral replication. This Avian infectious bronchitis virus (strain D1466) (IBV) protein is Nucleoprotein.